The following is a 545-amino-acid chain: 2-succinyl-5-enolpyruvyl-6-hydroxy-3-cyclohexene-1-carboxylate synthase (545 aa).

Positions 184–209 are disordered; it reads PLVPDPEPHGAPTPAGRPGGRPWTYT. Over residues 195–205 the composition is skewed to low complexity; the sequence is PTPAGRPGGRP.

It belongs to the TPP enzyme family. MenD subfamily. Homodimer. The cofactor is Mg(2+). It depends on Mn(2+) as a cofactor. Requires thiamine diphosphate as cofactor.

It carries out the reaction isochorismate + 2-oxoglutarate + H(+) = 5-enolpyruvoyl-6-hydroxy-2-succinyl-cyclohex-3-ene-1-carboxylate + CO2. Its pathway is quinol/quinone metabolism; 1,4-dihydroxy-2-naphthoate biosynthesis; 1,4-dihydroxy-2-naphthoate from chorismate: step 2/7. It functions in the pathway quinol/quinone metabolism; menaquinone biosynthesis. In terms of biological role, catalyzes the thiamine diphosphate-dependent decarboxylation of 2-oxoglutarate and the subsequent addition of the resulting succinic semialdehyde-thiamine pyrophosphate anion to isochorismate to yield 2-succinyl-5-enolpyruvyl-6-hydroxy-3-cyclohexene-1-carboxylate (SEPHCHC). In Mycobacterium avium (strain 104), this protein is 2-succinyl-5-enolpyruvyl-6-hydroxy-3-cyclohexene-1-carboxylate synthase.